The sequence spans 745 residues: Junction plakoglobin (745 aa).

Methionine 1 carries the post-translational modification N-acetylmethionine. Residue threonine 14 is glycosylated (O-linked (GlcNAc) threonine). Serine 99 and serine 125 each carry phosphoserine. ARM repeat units lie at residues 132–171 (NYQD…QLSK), 172–215 (KEAS…LSHH), 216–255 (REGL…NLLL), 258–297 (EGAK…LLAY), 298–341 (GNQE…LSVC), 342–381 (PSNK…NLSD), 383–420 (ATKQ…NLTC), 423–464 (SKNK…HLTS), 470–510 (EMAQ…NLAL), 512–551 (PANH…QPYT), 574–613 (PMNR…ELAQ), and 615–661 (KEAA…PDYR). The tract at residues 132-297 (NYQDDAELAT…TTDCLQLLAY (166 aa)) is interaction with DSC1 and DSG1. Residue serine 182 is modified to Phosphoserine. Residues 574 to 661 (PMNRMEIFRL…ISEDKNPDYR (88 aa)) form an interaction with DSC1 region. Phosphoserine is present on residues serine 665 and serine 730.

Belongs to the beta-catenin family. As to quaternary structure, homodimer. Component of an E-cadherin/catenin adhesion complex composed of at least E-cadherin/CDH1 and gamma-catenin/JUP, and possibly alpha-catenin/CTNNA1; the complex is located to adherens junctions. The stable association of CTNNA1 is controversial as CTNNA1 was shown not to bind to F-actin when assembled in the complex. Interacts with MUC1. Interacts with CAV1. Interacts with PTPRJ. Interacts with DSG1. Interacts with DSC1 and DSC2. Interacts with PKP2. Interacts with PKP3 (via N-terminus); the interaction is required for PKP3 localization to desmosome cell-cell junctions. Interacts with DSG4. In terms of processing, may be phosphorylated by FER.

The protein resides in the cell junction. Its subcellular location is the adherens junction. It is found in the desmosome. The protein localises to the cytoplasm. It localises to the cytoskeleton. The protein resides in the cell membrane. Its subcellular location is the nucleus. Common junctional plaque protein. The membrane-associated plaques are architectural elements in an important strategic position to influence the arrangement and function of both the cytoskeleton and the cells within the tissue. The presence of plakoglobin in both the desmosomes and in the intermediate junctions suggests that it plays a central role in the structure and function of submembranous plaques. Acts as a substrate for VE-PTP and is required by it to stimulate VE-cadherin function in endothelial cells. Can replace beta-catenin in E-cadherin/catenin adhesion complexes which are proposed to couple cadherins to the actin cytoskeleton. This chain is Junction plakoglobin, found in Sus scrofa (Pig).